The primary structure comprises 122 residues: UPF0231 protein VF_2154 (122 aa).

It belongs to the UPF0231 family.

The protein is UPF0231 protein VF_2154 of Aliivibrio fischeri (strain ATCC 700601 / ES114) (Vibrio fischeri).